A 141-amino-acid chain; its full sequence is Putative pre-16S rRNA nuclease (141 aa).

The protein belongs to the YqgF nuclease family.

It is found in the cytoplasm. Its function is as follows. Could be a nuclease involved in processing of the 5'-end of pre-16S rRNA. This Natranaerobius thermophilus (strain ATCC BAA-1301 / DSM 18059 / JW/NM-WN-LF) protein is Putative pre-16S rRNA nuclease.